A 71-amino-acid chain; its full sequence is ATP synthase subunit c (71 aa).

2 helical membrane-spanning segments follow: residues 9 to 29 (MIGY…IFAA) and 49 to 69 (LLGF…AFVI).

The protein belongs to the ATPase C chain family. As to quaternary structure, F-type ATPases have 2 components, F(1) - the catalytic core - and F(0) - the membrane proton channel. F(1) has five subunits: alpha(3), beta(3), gamma(1), delta(1), epsilon(1). F(0) has three main subunits: a(1), b(2) and c(10-14). The alpha and beta chains form an alternating ring which encloses part of the gamma chain. F(1) is attached to F(0) by a central stalk formed by the gamma and epsilon chains, while a peripheral stalk is formed by the delta and b chains.

The protein resides in the cell membrane. F(1)F(0) ATP synthase produces ATP from ADP in the presence of a proton or sodium gradient. F-type ATPases consist of two structural domains, F(1) containing the extramembraneous catalytic core and F(0) containing the membrane proton channel, linked together by a central stalk and a peripheral stalk. During catalysis, ATP synthesis in the catalytic domain of F(1) is coupled via a rotary mechanism of the central stalk subunits to proton translocation. In terms of biological role, key component of the F(0) channel; it plays a direct role in translocation across the membrane. A homomeric c-ring of between 10-14 subunits forms the central stalk rotor element with the F(1) delta and epsilon subunits. The chain is ATP synthase subunit c from Micrococcus luteus (strain ATCC 4698 / DSM 20030 / JCM 1464 / CCM 169 / CCUG 5858 / IAM 1056 / NBRC 3333 / NCIMB 9278 / NCTC 2665 / VKM Ac-2230) (Micrococcus lysodeikticus).